A 259-amino-acid chain; its full sequence is Synaptophysin-like protein 1 (259 aa).

Residues 1–33 (MAPNIYLVRQRISRLGQRMSGFQINLNPLKEPL) lie on the Cytoplasmic side of the membrane. Residues 28 to 237 (PLKEPLGFIK…NAWFVYKETS (210 aa)) form the MARVEL domain. Residues 34-54 (GFIKVLEWIASIFAFATCGGF) form a helical membrane-spanning segment. At 55 to 116 (KGQTEIQVNC…LIGDYSSSAQ (62 aa)) the chain is on the vesicular side. A glycan (N-linked (GlcNAc...) asparagine) is linked at N71. A helical transmembrane segment spans residues 117-137 (FYVTFAVFVFLYCIAALLLYV). The Cytoplasmic segment spans residues 138–150 (GYTSLYLDSRKLP). The chain crosses the membrane as a helical span at residues 151-171 (MIDFVVTLVATFLWLVSTSAW). Residues 172–212 (AKALTDIKIATGHNIIDELPPCKKKAVLCYFGSVTSMGSLN) are Vesicular-facing. Residue N212 is glycosylated (N-linked (GlcNAc...) asparagine). The chain crosses the membrane as a helical span at residues 213 to 233 (VSVIFGFLNMILWGGNAWFVY). The Cytoplasmic portion of the chain corresponds to 234 to 259 (KETSLHSPSNTSAPHSQGGIPPPTGI).

Belongs to the synaptophysin/synaptobrevin family.

The protein resides in the cytoplasmic vesicle membrane. Its subcellular location is the melanosome. This chain is Synaptophysin-like protein 1 (SYPL1), found in Homo sapiens (Human).